A 511-amino-acid chain; its full sequence is Pancreatic alpha-amylase (511 aa).

The first 15 residues, 1–15 (MKLFLLLSAFGFCWA), serve as a signal peptide directing secretion. Pyrrolidone carboxylic acid is present on Q16. 3 cysteine pairs are disulfide-bonded: C43-C101, C85-C130, and C156-C175. Ca(2+)-binding residues include N115, R173, and D182. Chloride is bound at residue R210. Catalysis depends on D212, which acts as the Nucleophile. H216 is a binding site for Ca(2+). E248 functions as the Proton donor in the catalytic mechanism. Residues N313 and R352 each coordinate chloride. C393 and C399 are joined by a disulfide. N-linked (GlcNAc...) asparagine glycosylation is present at N427. A disulfide bond links C465 and C477.

It belongs to the glycosyl hydrolase 13 family. As to quaternary structure, binds to the sea anemone inhibitor helianthamide and magnificamide. Ca(2+) serves as cofactor. The cofactor is chloride.

The protein localises to the secreted. Its subcellular location is the extracellular space. The enzyme catalyses Endohydrolysis of (1-&gt;4)-alpha-D-glucosidic linkages in polysaccharides containing three or more (1-&gt;4)-alpha-linked D-glucose units.. This is Pancreatic alpha-amylase (AMY2) from Sus scrofa (Pig).